The chain runs to 630 residues: Chaperone protein HtpG (630 aa).

The tract at residues 1–338 (MTVEANKETL…SNDLSLNVSR (338 aa)) is a; substrate-binding. The segment at 339-555 (EILQNDSTVE…QFDMGAQMKK (217 aa)) is b. Residues 556-630 (IMEAAGQKVP…LNRLLLELAN (75 aa)) form a c region.

The protein belongs to the heat shock protein 90 family. Homodimer.

The protein localises to the cytoplasm. Functionally, molecular chaperone. Has ATPase activity. This Marinobacter nauticus (strain ATCC 700491 / DSM 11845 / VT8) (Marinobacter aquaeolei) protein is Chaperone protein HtpG.